Reading from the N-terminus, the 481-residue chain is Guanine nucleotide exchange factor C9orf72 homolog (481 aa).

The uDENN C9ORF72-type domain maps to 23-194 (SPLLAATFAY…ELLASMRSHS (172 aa)). In terms of domain architecture, cDENN C9ORF72-type spans 200 to 343 (DIADTVLNDD…SELTAFWRAT (144 aa)). Residues 370–464 (VLHRDTLVKA…IKPGLHSFIF (95 aa)) enclose the dDENN C9ORF72-type domain. Positions 461 to 481 (SFIFGRPFYTSVQERDVLMTF) are required for the homodimerization of the C9orf72-SMCR8 complex.

As to quaternary structure, component of the C9orf72-SMCR8 complex, at least composed of C9orf72, SMCR8 and WDR41. The complex is formed of two protomers, each individually consisting of one molecule each of C9orf72, SMCR8 and WDR41. The protomers homodimerize via an interaction between C9orf72 (via C-terminus) and SMCR8 (via N-terminus). Within each protomer SMCR8 (via DENN domain) acts as a bridging protein between WDR41 (via C-terminus and N-terminus) and C9orf72 (via C-terminus). The C9orf72-SMCR8 complex associates with the ULK1/ATG1 kinase complex. Interacts with ULK1/ATG1 kinase complex members ULK1, ATG13 and RB1CC1. Interacts with SMCR8; the interaction is direct. Interacts with HNRNPA1, HNRNPA2B1 and UBQLN2. Interacts with small Rab GTPase RAB1A; the interaction mediates recruitment of RAB1A to the ULK1/ATG1 kinase complex. Also interacts with small Rab GTPase RAB7A. Interacts with cofilin. Interacts with GTP-binding proteins ARF1 and ARF6. Interacts with the DLG4/PSD-95. Interacts with CARM1 (via PH domain-like fold). Interacts with RAB39A and RAB39B (in GDP-bound forms); functions as GEF for RAB39A and RAB39B.

The protein localises to the nucleus. The protein resides in the cytoplasm. Its subcellular location is the P-body. It is found in the stress granule. It localises to the endosome. The protein localises to the lysosome. The protein resides in the cytoplasmic vesicle. Its subcellular location is the autophagosome. It is found in the autolysosome. It localises to the secreted. The protein localises to the cell projection. The protein resides in the axon. Its subcellular location is the growth cone. It is found in the perikaryon. Its function is as follows. Acts as a guanine-nucleotide releasing factor (GEF) for Rab GTPases by promoting the conversion of inactive RAB-GDP to the active form RAB-GTP. Acts as a GEF for RAB39A which enables HOPS-mediated autophagosome-lysosome membrane tethering and fusion in mammalian autophagy. Component of the C9orf72-SMCR8 complex where both subunits display GEF activity and that regulates autophagy. As part of the C9orf72-SMCR8-WDR41 (CSW) complex, functions as GEF for RAB8A and RAB39B, thereby promoting autophagosome maturation. As part of the C9orf72-SMCR8 complex, also functions as GTPase activating protein (GAP) for RAB8A and RAB11A in vitro. The C9orf72-SMCR8 complex also acts as a regulator of autophagy initiation by interacting with the ULK1/ATG1 kinase complex and modulating its protein kinase activity. Promotes initiation of autophagy by regulating the RAB1A-dependent trafficking of the ULK1/ATG1 kinase complex to the phagophore which leads to autophagosome formation. Acts as a regulator of mTORC1 signaling by promoting phosphorylation of mTORC1 substrates. Plays a role in endosomal trafficking. May be involved in regulating the maturation of phagosomes to lysosomes. Promotes the lysosomal localization and lysosome-mediated degradation of CARM1 which leads to inhibition of starvation-induced lipid metabolism. Regulates actin dynamics in motor neurons by inhibiting the GTP-binding activity of ARF6, leading to ARF6 inactivation. This reduces the activity of the LIMK1 and LIMK2 kinases which are responsible for phosphorylation and inactivation of cofilin, leading to CFL1/cofilin activation. Positively regulates axon extension and axon growth cone size in spinal motor neurons. Required for SMCR8 protein expression and localization at pre- and post-synaptic compartments in the forebrain, also regulates protein abundance of RAB3A and GRIA1/GLUR1 in post-synaptic compartments in the forebrain and hippocampus. Plays a role within the hematopoietic system in restricting inflammation and the development of autoimmunity. The protein is Guanine nucleotide exchange factor C9orf72 homolog of Rattus norvegicus (Rat).